Here is a 1385-residue protein sequence, read N- to C-terminus: DNA-directed RNA polymerase subunit beta' (1385 aa).

4 residues coordinate Zn(2+): Cys-72, Cys-74, Cys-87, and Cys-90. Mg(2+) is bound by residues Asp-463, Asp-465, and Asp-467. Zn(2+) is bound by residues Cys-813, Cys-887, Cys-894, and Cys-897.

This sequence belongs to the RNA polymerase beta' chain family. As to quaternary structure, the RNAP catalytic core consists of 2 alpha, 1 beta, 1 beta' and 1 omega subunit. When a sigma factor is associated with the core the holoenzyme is formed, which can initiate transcription. It depends on Mg(2+) as a cofactor. The cofactor is Zn(2+).

It carries out the reaction RNA(n) + a ribonucleoside 5'-triphosphate = RNA(n+1) + diphosphate. Functionally, DNA-dependent RNA polymerase catalyzes the transcription of DNA into RNA using the four ribonucleoside triphosphates as substrates. This chain is DNA-directed RNA polymerase subunit beta', found in Trichlorobacter lovleyi (strain ATCC BAA-1151 / DSM 17278 / SZ) (Geobacter lovleyi).